A 167-amino-acid polypeptide reads, in one-letter code: Small ribosomal subunit protein uS3m (167 aa).

A mitochondrion-targeting transit peptide spans 1–35 (MAWSASVRGLGQRVLACSRELPGAWRTLHTSAVCA).

This sequence belongs to the universal ribosomal protein uS3 family. Component of the mitochondrial ribosome small subunit (28S) which comprises a 12S rRNA and about 30 distinct proteins.

The protein localises to the mitochondrion. This is Small ribosomal subunit protein uS3m (Mrps24) from Mus musculus (Mouse).